Consider the following 358-residue polypeptide: MKVGVALSGGVDSAVALYLLLKEGHEVKAFHMKTKEDEFFLKKEIKKKVCCSPSDTADAIRIARSLGVEIEIVDVREVFREKVIEPFKRDLLRGLTPNPCVHCNRYVKFGYFMDYVLSQGFDAFASGHYARVEFSGKYGKKVIKKGVDGKKDQSYFLARIEPWRIEKLLFPNGIYTKEEIRRIAEEAGIHVAKKQESQDVCFIPDGSIENFLKDEGITLSEGKVITEKGEVVGHHRGYPLYTVGQRKGLKIEKFGERLYVREKIPESNVVVVSGLEDVFFSGLIAEDPVWHVEVPEEFRCVCRVRKKSEEAPAVVRVRDNEVEVRFEKKVFAVTPGQIAAFYDEDTLLGGAIIKEGIR.

ATP contacts are provided by residues 6 to 13 (ALSGGVDS) and methionine 32. Residue cysteine 103 is the Nucleophile of the active site. An intrachain disulfide couples cysteine 103 to cysteine 201. Glycine 127 contributes to the ATP binding site. The interval 151–153 (KDQ) is interaction with tRNA. Cysteine 201 functions as the Cysteine persulfide intermediate in the catalytic mechanism.

It belongs to the MnmA/TRMU family.

The protein localises to the cytoplasm. It carries out the reaction S-sulfanyl-L-cysteinyl-[protein] + uridine(34) in tRNA + AH2 + ATP = 2-thiouridine(34) in tRNA + L-cysteinyl-[protein] + A + AMP + diphosphate + H(+). Functionally, catalyzes the 2-thiolation of uridine at the wobble position (U34) of tRNA, leading to the formation of s(2)U34. The polypeptide is tRNA-specific 2-thiouridylase MnmA (Thermotoga sp. (strain RQ2)).